The following is a 608-amino-acid chain: V-type ATP synthase subunit I (608 aa).

The next 9 helical transmembrane spans lie at 308–325 (ISFI…MIIG), 327–346 (AAYG…SFLL), 356–376 (GLIF…GTWF), 405–425 (IIFI…VWNF), 438–458 (IAQI…LNLI), 464–484 (FPMY…VFVF), 495–515 (CILK…SGFA), 517–537 (IISY…SASF), and 550–570 (IGLI…NIML).

The protein belongs to the V-ATPase 116 kDa subunit family.

It is found in the cell membrane. Produces ATP from ADP in the presence of a proton gradient across the membrane. The chain is V-type ATP synthase subunit I (atpI) from Borreliella burgdorferi (strain ATCC 35210 / DSM 4680 / CIP 102532 / B31) (Borrelia burgdorferi).